A 103-amino-acid polypeptide reads, in one-letter code: ATP synthase subunit H, mitochondrial (103 aa).

The N-terminal 26 residues, 1-26 (MSRILKSLSRSYSTTSPRLYVDVVQG), are a transit peptide targeting the mitochondrion.

It belongs to the ATPase h subunit family. In terms of assembly, F-type ATPases have 2 components, CF(1) - the catalytic core - and CF(0) - the membrane proton channel.

It is found in the mitochondrion. The protein resides in the mitochondrion inner membrane. Its function is as follows. Mitochondrial membrane ATP synthase (F(1)F(0) ATP synthase or Complex V) produces ATP from ADP in the presence of a proton gradient across the membrane which is generated by electron transport complexes of the respiratory chain. F-type ATPases consist of two structural domains, F(1) - containing the extramembraneous catalytic core and F(0) - containing the membrane proton channel, linked together by a central stalk and a peripheral stalk. During catalysis, ATP synthesis in the catalytic domain of F(1) is coupled via a rotary mechanism of the central stalk subunits to proton translocation. Part of the complex F(0) domain. Minor subunit located with subunit a in the membrane. This is ATP synthase subunit H, mitochondrial (atp14) from Schizosaccharomyces pombe (strain 972 / ATCC 24843) (Fission yeast).